A 348-amino-acid chain; its full sequence is LIM domain-containing protein unc-97 (348 aa).

5 consecutive LIM zinc-binding domains span residues 21 to 73 (CVRC…CEHD), 82 to 132 (CGKC…CREC), 146 to 196 (CHKC…CLRC), 205 to 255 (CGAC…CEQH), and 264 to 315 (CFKC…CKRC).

As to quaternary structure, interacts with unc-98. Component of an integrin containing attachment complex, composed of at least pat-2, pat-3, pat-4, pat-6, unc-52, unc-97 and unc-112. As to expression, restricted to tissue types that attach to the hypodermis, specifically body wall muscles, vulval muscles, and mechanosensory neurons.

The protein localises to the cell junction. It is found in the adherens junction. It localises to the nucleus. Functionally, component of an integrin containing attachment complex, which is required for muscle development and maintenance. Probably function in adherens junction. Affects the structural integrity of the integrin containing muscle adherens junctions and contributes to the mechanosensory functions of touch neurons. The sequence is that of LIM domain-containing protein unc-97 from Caenorhabditis elegans.